The primary structure comprises 314 residues: tRNA dimethylallyltransferase (314 aa).

9 to 16 lines the ATP pocket; it reads GPTAVGKT. 11 to 16 contributes to the substrate binding site; it reads TAVGKT. Residues 34–37 are interaction with substrate tRNA; it reads DSVQ.

This sequence belongs to the IPP transferase family. Monomer. Mg(2+) is required as a cofactor.

The catalysed reaction is adenosine(37) in tRNA + dimethylallyl diphosphate = N(6)-dimethylallyladenosine(37) in tRNA + diphosphate. Catalyzes the transfer of a dimethylallyl group onto the adenine at position 37 in tRNAs that read codons beginning with uridine, leading to the formation of N6-(dimethylallyl)adenosine (i(6)A). The chain is tRNA dimethylallyltransferase from Desulfitobacterium hafniense (strain DSM 10664 / DCB-2).